The sequence spans 585 residues: Efflux pump dotC (585 aa).

Basic and acidic residues predominate over residues 1 to 34 (MSEDHTKADNLSEKDPHSPERSDSSSHEDAHARE). The disordered stretch occupies residues 1–45 (MSEDHTKADNLSEKDPHSPERSDSSSHEDAHAREEEESSDDDGAL). Asn10 carries N-linked (GlcNAc...) asparagine glycosylation. The segment covering 35 to 44 (EEESSDDDGA) has biased composition (acidic residues). Residues 51 to 71 (SLIAIVMIALSLIGLQLAVFL) form a helical membrane-spanning segment. A glycan (N-linked (GlcNAc...) asparagine) is linked at Asn91. 13 helical membrane-spanning segments follow: residues 94-114 (AAYT…TPIW), 132-152 (ALFM…MLIT), 158-178 (GAAG…LFSL), 186-206 (GMIG…GGAF), 214-234 (WCFY…FFFL), 247-267 (FAAI…MFLF), 280-300 (SATV…FGLV), 323-343 (ALLV…YLPL), 353-373 (PILA…SAAA), 385-405 (LIPM…LINF), 414-434 (LIIY…APLV), 449-471 (TATF…QVLY), and 524-544 (SPMW…ILLV). The interval 564–585 (KKAEAERKAERQAKDLEKAQKS) is disordered.

It belongs to the major facilitator superfamily. TCR/Tet family.

The protein localises to the cell membrane. It is found in the vacuole membrane. Efflux pump; part of the gene cluster that mediates the biosynthesis of dothistromin (DOTH), a polyketide toxin very similar in structure to the aflatoxin precursor, versicolorin B. One function of dotC may be to transport early-stage dothistromin biosynthetic intermediates from the cytoplasm into vacuoles, thereby affecting the rate of dothistromin production. The polypeptide is Efflux pump dotC (Dothistroma septosporum (Red band needle blight fungus)).